Consider the following 29-residue polypeptide: Chassatide C1 (29 aa).

The segment at residues 1-29 (GDACGETCFTGICFTAGCSCNPWPTCTRN) is a cross-link (cyclopeptide (Gly-Asn)). 3 cysteine pairs are disulfide-bonded: cysteine 4–cysteine 18, cysteine 8–cysteine 20, and cysteine 13–cysteine 26.

In terms of processing, this is a cyclic peptide. Expressed in leaf, fruit, pedical and stem but not in root (at protein level).

In terms of biological role, probably participates in a plant defense mechanism. This is Chassatide C1 from Chassalia chartacea (Chassalia curviflora).